Consider the following 935-residue polypeptide: Transcriptional regulatory protein LevR (935 aa).

The Sigma-54 factor interaction domain occupies 117 to 348 (AKGSLKKAIS…LKSNVQLVCA (232 aa)). ATP contacts are provided by residues 145–152 (GPTGSGKS) and 215–224 (ANGGILFMDE). The PRD 1 domain occupies 468 to 573 (FVEDDVIQMT…HSIKSLKENK (106 aa)). Residue histidine 503 is modified to Phosphohistidine. The region spanning 574-711 (RVGIIVAAHG…PAASGKKKAL (138 aa)) is the PTS EIIA type-4 domain. Histidine 582 bears the Phosphohistidine; by HPr mark. The 105-residue stretch at 831-935 (LNPHHVIDML…FAEEVHGQLF (105 aa)) folds into the PRD 2 domain. Histidine 866 carries the post-translational modification Phosphohistidine.

The protein belongs to the transcriptional antiterminator BglG family. In terms of processing, possibly phosphorylated and inactivated by the PTS system.

In terms of biological role, involved in positive regulation of the levanase operon which comprises the levDEFG genes for a fructose PTS system, and sacA for levanase. This chain is Transcriptional regulatory protein LevR (levR), found in Bacillus subtilis (strain 168).